The primary structure comprises 214 residues: Thymidylate kinase (214 aa).

Residue 7 to 14 participates in ATP binding; the sequence is GIEGAGKT.

It belongs to the thymidylate kinase family.

The enzyme catalyses dTMP + ATP = dTDP + ADP. Its function is as follows. Phosphorylation of dTMP to form dTDP in both de novo and salvage pathways of dTTP synthesis. The sequence is that of Thymidylate kinase from Desulfosudis oleivorans (strain DSM 6200 / JCM 39069 / Hxd3) (Desulfococcus oleovorans).